We begin with the raw amino-acid sequence, 418 residues long: Gamma-glutamyl phosphate reductase (418 aa).

The protein belongs to the gamma-glutamyl phosphate reductase family.

The protein resides in the cytoplasm. It catalyses the reaction L-glutamate 5-semialdehyde + phosphate + NADP(+) = L-glutamyl 5-phosphate + NADPH + H(+). It functions in the pathway amino-acid biosynthesis; L-proline biosynthesis; L-glutamate 5-semialdehyde from L-glutamate: step 2/2. In terms of biological role, catalyzes the NADPH-dependent reduction of L-glutamate 5-phosphate into L-glutamate 5-semialdehyde and phosphate. The product spontaneously undergoes cyclization to form 1-pyrroline-5-carboxylate. The polypeptide is Gamma-glutamyl phosphate reductase (Lacticaseibacillus paracasei (strain ATCC 334 / BCRC 17002 / CCUG 31169 / CIP 107868 / KCTC 3260 / NRRL B-441) (Lactobacillus paracasei)).